The sequence spans 425 residues: Meiotic recombination protein spo-11 (425 aa).

The segment at 1-38 (MYEYSFNPNIDHEPGSVESQQSTIYSDSDDSDDSFLDD) is disordered. The 144-residue stretch at 15 to 158 (GSVESQQSTI…LNILSCGRGI (144 aa)) folds into the Topo IIA-type catalytic domain. Residues 27-38 (DSDDSDDSFLDD) are compositionally biased toward acidic residues. Residue Tyr-119 is the O-(5'-phospho-DNA)-tyrosine intermediate of the active site. 2 residues coordinate Mg(2+): Glu-202 and Asp-255.

The protein belongs to the TOP6A family. Mg(2+) serves as cofactor.

Its subcellular location is the nucleus. The catalysed reaction is ATP-dependent breakage, passage and rejoining of double-stranded DNA.. In terms of biological role, required for meiotic recombination. Mediates DNA cleavage that forms the double-strand breaks (DSB) that initiate meiotic recombination. This is Meiotic recombination protein spo-11 (spo-11) from Caenorhabditis elegans.